Reading from the N-terminus, the 197-residue chain is Guanylate kinase (197 aa).

Residues 1-30 form a disordered region; the sequence is MAATPRGTSPVPPDARPRLTVLSGPSGVGK. In terms of domain architecture, Guanylate kinase-like spans 17–197; that stretch reads PRLTVLSGPS…RELLALTNVV (181 aa). 24-31 is a binding site for ATP; the sequence is GPSGVGKS.

The protein belongs to the guanylate kinase family.

The protein localises to the cytoplasm. It catalyses the reaction GMP + ATP = GDP + ADP. Its function is as follows. Essential for recycling GMP and indirectly, cGMP. The protein is Guanylate kinase (gmk) of Streptomyces coelicolor (strain ATCC BAA-471 / A3(2) / M145).